Here is a 150-residue protein sequence, read N- to C-terminus: Cytosine deaminase (150 aa).

One can recognise a CMP/dCMP-type deaminase domain in the interval 3–121 (FDDKKGLQVA…KLLIENGVEV (119 aa)). Asparagine 44 serves as a coordination point for substrate. Residue histidine 55 coordinates Zn(2+). The Proton donor role is filled by glutamate 57. Residues cysteine 84 and cysteine 87 each contribute to the Zn(2+) site. Residue aspartate 147 coordinates substrate.

The protein belongs to the cytidine and deoxycytidylate deaminase family. In terms of assembly, homodimer. Zn(2+) serves as cofactor.

Its subcellular location is the cytoplasm. It is found in the nucleus. It catalyses the reaction cytosine + H2O + H(+) = uracil + NH4(+). The protein operates within pyrimidine metabolism; UMP biosynthesis via salvage pathway; uracil from cytosine: step 1/1. Its function is as follows. Catalyzes the hydrolytic deamination of cytosine to uracil or 5-methylcytosine to thymine. Is involved in the pyrimidine salvage pathway, which allows the cell to utilize cytosine for pyrimidine nucleotide synthesis. This chain is Cytosine deaminase, found in Candida albicans (strain SC5314 / ATCC MYA-2876) (Yeast).